Here is a 293-residue protein sequence, read N- to C-terminus: PHO85 cyclin PHO80 (293 aa).

A phosphoserine; by PHO85 mark is found at S234 and S267. Residues 254-272 (ESGSQTTQLKGSSSPNSHS) are compositionally biased toward polar residues. The segment at 254 to 293 (ESGSQTTQLKGSSSPNSHSSQKRYSEAKDAHIYNKRSKPD) is disordered. The segment covering 276 to 293 (RYSEAKDAHIYNKRSKPD) has biased composition (basic and acidic residues).

The protein belongs to the cyclin family. PHO80 subfamily. Forms a cyclin-CDK complex with PHO85. PHO80-PHO85 forms a stable complex with its inhibitor PHO81 under both high- and low-phosphate conditions, but PHO81 only inhibits the kinase upon phosphate starvation. Interacts with transcription factor PHO4. Phosphorylation of Ser-267 by PHO85 is required to form an active cyclin-kinase complex and for function.

Its subcellular location is the cytoplasm. The protein localises to the nucleus. Inhibited by the CDK inhibitor (CKI) PHO81 in response to phosphate starvation. Cyclin partner of the cyclin-dependent kinase (CDK) PHO85. Negatively regulates the expression of phosphate-starvation-responsive genes under phosphate-rich conditions. The PHO80-PHO85 cyclin-CDK holoenzyme phosphorylates and inactivates the transcription factor PHO4, by preventing its association with the transcription factor PHO2 and the nuclear import receptor PSE1, and by promoting association with the nuclear export receptor MSN5, excluding PHO4 from the nucleus. PHO80-PHO85 phosphorylates and inactivates protein kinase RIM15 by retaining it in the cytoplasm, antagonizing RIM15-induced entry into stationary phase. PHO80-PHO85 also phosphorylates and inactivates the calcineurin-responsive transcription factor CRZ1, linking PHO85 to calcium signaling. This chain is PHO85 cyclin PHO80 (PHO80), found in Saccharomyces cerevisiae (strain ATCC 204508 / S288c) (Baker's yeast).